The primary structure comprises 161 residues: Allophycocyanin alpha chain (161 aa).

N71 is modified (N4-methylasparagine). Residue C81 coordinates (2R,3E)-phycocyanobilin.

It belongs to the phycobiliprotein family. As to quaternary structure, heterodimer of an alpha and a beta chain. Post-translationally, contains one covalently linked phycocyanobilin chromophore.

The protein resides in the cellular thylakoid membrane. Its function is as follows. Light-harvesting photosynthetic bile pigment-protein from the phycobiliprotein complex. Allophycocyanin has a maximum absorption at approximately 650 nanometers. In Synechocystis sp. (strain ATCC 27184 / PCC 6803 / Kazusa), this protein is Allophycocyanin alpha chain (apcA).